The primary structure comprises 159 residues: RxLR effector protein 24 (159 aa).

The signal sequence occupies residues 1–18 (MRFLVWVFFVGLVTFVSG). The RxLR-dEER motif lies at 58 to 82 (RFLRSNANQDLTTANDDSDVKEEER). Positions 109-159 (EKAFQHMMKQGETPTSLAKRLEIGGAAELRYEKVYEKYTAWWINYHTVAGT) are RABA-binding domain.

This sequence belongs to the RxLR effector family. In terms of assembly, interacts with potato RABA GTPases including RABA1a, RABA2a and RABA4a.

It is found in the secreted. It localises to the host cell membrane. The protein resides in the host endomembrane system. Effector protein that contributes to pathogen virulence. Targets members of the RABA GTPases subfamily to inhibit vesicular secretion, leading to an accumulation of secretory proteins in the endoplasmic reticulum. In Phytophthora infestans (strain T30-4) (Potato late blight agent), this protein is RxLR effector protein 24.